The chain runs to 148 residues: uncharacterized protein (148 aa).

An N-acetyltransferase domain is found at 7-148 (LEINYKTDEL…HDVLLWKPIR (142 aa)).

This is an uncharacterized protein from Staphylococcus aureus (strain Mu50 / ATCC 700699).